Consider the following 208-residue polypeptide: MADLSAQDKLKQICDALREETLKPAEEEAGSIVHNAREQAKRIVEEAKEEAQRIIRSAEETADQTLKKGEAALVQAGKRSLENLKQAVETKIFRESLGEWLDHVATDPEVSAKLVQALVQAVDAQGISGNLSAYIGKHVSARAVNEALGKEITSKLKEKGVSVGNFSGGAQLKVEERNWVLDMSSEVLLDLLTRFLQKDFREMIFQSC.

This sequence belongs to the V-ATPase E subunit family.

Its function is as follows. Produces ATP from ADP in the presence of a proton gradient across the membrane. The protein is V-type ATP synthase subunit E of Chlamydia trachomatis serovar A (strain ATCC VR-571B / DSM 19440 / HAR-13).